Consider the following 185-residue polypeptide: HTH-type transcriptional regulator Hpr (185 aa).

The HTH marR-type domain maps to Ala13–Gly157. The segment at residues Ile63 to Glu86 is a DNA-binding region (H-T-H motif).

In terms of assembly, homodimer.

In terms of biological role, negative regulator of protease production and sporulation. The sequence is that of HTH-type transcriptional regulator Hpr from Bacillus cytotoxicus (strain DSM 22905 / CIP 110041 / 391-98 / NVH 391-98).